A 227-amino-acid chain; its full sequence is Ferritin light chain (227 aa).

The N-terminal stretch at 1 to 19 (MKFFVALALFACLGSLALA) is a signal peptide. C25 and C44 are oxidised to a cystine. One can recognise a Ferritin-like diiron domain in the interval 48 to 208 (FAGIDHIEPE…GYANDLAKLM (161 aa)).

The protein belongs to the ferritin family. As to quaternary structure, oligomer of 12 light (L) chains and 12 heavy (H) chains; L and H chains are disulfide-linked. The functional molecule forms a roughly spherical shell with a diameter of 12 nm and contains a central cavity into which the insoluble ferric iron core is deposited. As to expression, expressed in hemolymph, gut, ovaries and to a lesser extent in testes (at protein level). Expressed in the head (at protein level).

It is found in the golgi apparatus. Its subcellular location is the secreted. Functionally, stores iron in a soluble, non-toxic, readily available form. Important for iron homeostasis. Iron is taken up in the ferrous form and deposited as ferric hydroxides after oxidation. Ferritin is composed of a heavy (H) chain which is responsible for the oxidation and uptake of ferrous iron, and a light (L) chain which facilitates the nucleation of the ferrihydrite iron core. Required for dietary iron absorption in the midgut. Involved in tissue iron detoxification by exporting excess iron. Plays a role in the maintenance of circadian rhythms. Required for embryo and larval development. In Drosophila melanogaster (Fruit fly), this protein is Ferritin light chain.